A 351-amino-acid chain; its full sequence is Photosystem II D2 protein (351 aa).

The helical transmembrane segment at 39–59 threads the bilayer; that stretch reads CAYLAVGGWLTGTTFVTSWYT. Histidine 116 is a chlorophyll a binding site. Residues 123 to 139 form a helical membrane-spanning segment; sequence GFCLRQFEIARLVGLRP. 2 residues coordinate pheophytin a: glutamine 128 and asparagine 141. The helical transmembrane segment at 151-164 threads the bilayer; sequence VFVSVFLMYPLGQA. Chlorophyll a is bound at residue histidine 196. A helical transmembrane segment spans residues 206 to 226; that stretch reads GALLCAIHGATVQNTLFEDGD. Residues histidine 213 and phenylalanine 260 each coordinate a plastoquinone. Position 213 (histidine 213) interacts with Fe cation. Histidine 267 contacts Fe cation. Residues 277-293 form a helical membrane-spanning segment; it reads GLWTSAFGIVGLALNLR.

The protein belongs to the reaction center PufL/M/PsbA/D family. In terms of assembly, PSII is composed of 1 copy each of membrane proteins PsbA, PsbB, PsbC, PsbD, PsbE, PsbF, PsbH, PsbI, PsbJ, PsbK, PsbL, PsbM, PsbT, PsbX, PsbY, PsbZ, Psb30/Ycf12, at least 3 peripheral proteins of the oxygen-evolving complex and a large number of cofactors. It forms dimeric complexes. Requires The D1/D2 heterodimer binds P680, chlorophylls that are the primary electron donor of PSII, and subsequent electron acceptors. It shares a non-heme iron and each subunit binds pheophytin, quinone, additional chlorophylls, carotenoids and lipids. There is also a Cl(-1) ion associated with D1 and D2, which is required for oxygen evolution. The PSII complex binds additional chlorophylls, carotenoids and specific lipids. as cofactor.

Its subcellular location is the plastid. It is found in the chloroplast thylakoid membrane. It carries out the reaction 2 a plastoquinone + 4 hnu + 2 H2O = 2 a plastoquinol + O2. In terms of biological role, photosystem II (PSII) is a light-driven water:plastoquinone oxidoreductase that uses light energy to abstract electrons from H(2)O, generating O(2) and a proton gradient subsequently used for ATP formation. It consists of a core antenna complex that captures photons, and an electron transfer chain that converts photonic excitation into a charge separation. The D1/D2 (PsbA/PsbD) reaction center heterodimer binds P680, the primary electron donor of PSII as well as several subsequent electron acceptors. D2 is needed for assembly of a stable PSII complex. The protein is Photosystem II D2 protein of Porphyra purpurea (Red seaweed).